A 745-amino-acid chain; its full sequence is Phosphoribosylformylglycinamidine synthase subunit PurL (745 aa).

His-41 is a catalytic residue. Tyr-44 and Lys-83 together coordinate ATP. Position 85 (Glu-85) interacts with Mg(2+). Substrate-binding positions include 86 to 89 (SHNH) and Arg-108. The Proton acceptor role is filled by His-87. Position 109 (Asp-109) interacts with Mg(2+). Residue Gln-232 participates in substrate binding. Residue Asp-260 coordinates Mg(2+). 304–306 (ESQ) lines the substrate pocket. Asp-494 and Gly-531 together coordinate ATP. A Mg(2+)-binding site is contributed by Asn-532. Residue Ser-534 participates in substrate binding.

It belongs to the FGAMS family. Monomer. Part of the FGAM synthase complex composed of 1 PurL, 1 PurQ and 2 PurS subunits.

It is found in the cytoplasm. It carries out the reaction N(2)-formyl-N(1)-(5-phospho-beta-D-ribosyl)glycinamide + L-glutamine + ATP + H2O = 2-formamido-N(1)-(5-O-phospho-beta-D-ribosyl)acetamidine + L-glutamate + ADP + phosphate + H(+). Its pathway is purine metabolism; IMP biosynthesis via de novo pathway; 5-amino-1-(5-phospho-D-ribosyl)imidazole from N(2)-formyl-N(1)-(5-phospho-D-ribosyl)glycinamide: step 1/2. Its function is as follows. Part of the phosphoribosylformylglycinamidine synthase complex involved in the purines biosynthetic pathway. Catalyzes the ATP-dependent conversion of formylglycinamide ribonucleotide (FGAR) and glutamine to yield formylglycinamidine ribonucleotide (FGAM) and glutamate. The FGAM synthase complex is composed of three subunits. PurQ produces an ammonia molecule by converting glutamine to glutamate. PurL transfers the ammonia molecule to FGAR to form FGAM in an ATP-dependent manner. PurS interacts with PurQ and PurL and is thought to assist in the transfer of the ammonia molecule from PurQ to PurL. The polypeptide is Phosphoribosylformylglycinamidine synthase subunit PurL (Aquifex aeolicus (strain VF5)).